Here is a 333-residue protein sequence, read N- to C-terminus: T-cell surface glycoprotein CD1b-1 (333 aa).

A signal peptide spans 1 to 18 (MLLLPLLLLAVIVPGGDN). At 19–302 (EDVFQGPTSF…LYWGHPTSTG (284 aa)) the chain is on the extracellular side. N-linked (GlcNAc...) asparagine glycosylation is found at N38, N75, N146, and N258. Cystine bridges form between C120/C184 and C224/C279. One can recognise an Ig-like domain in the interval 185–295 (PRYFLSVLDA…LGDQDIVLYW (111 aa)). The chain crosses the membrane as a helical span at residues 303–323 (LIFVAIIVSSLILLICLALWF). Residues 324–333 (WRRWSYLTIL) are Cytoplasmic-facing. The Internalization signal signature appears at 329–332 (YLTI).

Heterodimer with B2M (beta-2-microglobulin). Interacts with saposin C.

The protein resides in the cell membrane. The protein localises to the endosome membrane. It is found in the lysosome membrane. Antigen-presenting protein that binds self and non-self lipid and glycolipid antigens and presents them to T-cell receptors on natural killer T-cells. The sequence is that of T-cell surface glycoprotein CD1b-1 from Ovis aries (Sheep).